A 69-amino-acid chain; its full sequence is Intrepicalcin (69 aa).

The first 27 residues, 1-27 (MRQNTMTIIFIVFIVTFASLTIYGAEA), serve as a signal peptide directing secretion. Positions 28 to 36 (SEANFLERR) are excised as a propeptide. 3 disulfides stabilise this stretch: Cys-39–Cys-53, Cys-46–Cys-57, and Cys-52–Cys-68. The interval 59–60 (RR) is essential for stimulation of [3H]ryanodine binding to RYR1.

It belongs to the scorpion calcin family. As to expression, expressed by the venom gland.

The protein localises to the secreted. Functionally, this toxin stabilizes ryanodine receptor 1 (RyR1) opening in a long-lasting subconductance state (55% of the full conductance state). Furthermore, it triggers calcium release from sarcoplasmic vesicles (45.3 nM are enough to induce a sharp release, and 50% of the total calcium is released after toxin (100 nM) addition) probably by acting as a cell-penetrating peptide (CPP). In addition, it has been shown to dose-dependently stimulate ryanodine binding to RyR1 (EC(50)=17.4 nM). It also augments the bell-shaped calcium-[3H]ryanodine binding curve that is maximal at about 10 uM calcium concentration. It binds a different site as ryanodine. It acts synergistically with caffeine. In vivo, intracerebroventricular injection into mice induces neurotoxic symptoms, followed by death. The protein is Intrepicalcin of Thorellius intrepidus (Scorpion).